The following is a 681-amino-acid chain: Methionine--tRNA ligase (681 aa).

A 'HIGH' region motif is present at residues 12-22; it reads PYANGSIHLGH. Positions 143, 146, 156, and 159 each coordinate Zn(2+). The short motif at 327–331 is the 'KMSKS' region element; it reads KMSKS. Lysine 330 lines the ATP pocket. The segment covering 545-557 has biased composition (basic and acidic residues); the sequence is FEKSNPEKAKQDP. The interval 545–566 is disordered; it reads FEKSNPEKAKQDPSKSNTNEVK. The 102-residue stretch at 580–681 folds into the tRNA-binding domain; that stretch reads ELSKVELRVG…RDASPGDLLK (102 aa).

The protein belongs to the class-I aminoacyl-tRNA synthetase family. MetG type 1 subfamily. Homodimer. The cofactor is Zn(2+).

The protein resides in the cytoplasm. The catalysed reaction is tRNA(Met) + L-methionine + ATP = L-methionyl-tRNA(Met) + AMP + diphosphate. Its function is as follows. Is required not only for elongation of protein synthesis but also for the initiation of all mRNA translation through initiator tRNA(fMet) aminoacylation. This is Methionine--tRNA ligase from Leptospira biflexa serovar Patoc (strain Patoc 1 / ATCC 23582 / Paris).